The chain runs to 176 residues: Ribosome maturation factor RimM (176 aa).

The PRC barrel domain occupies alanine 93–isoleucine 166.

The protein belongs to the RimM family. Binds ribosomal protein uS19.

It is found in the cytoplasm. Its function is as follows. An accessory protein needed during the final step in the assembly of 30S ribosomal subunit, possibly for assembly of the head region. Essential for efficient processing of 16S rRNA. May be needed both before and after RbfA during the maturation of 16S rRNA. It has affinity for free ribosomal 30S subunits but not for 70S ribosomes. This chain is Ribosome maturation factor RimM, found in Rhodopseudomonas palustris (strain ATCC BAA-98 / CGA009).